Consider the following 460-residue polypeptide: Probable asparagine--tRNA ligase, mitochondrial (460 aa).

Belongs to the class-II aminoacyl-tRNA synthetase family.

It is found in the mitochondrion matrix. It catalyses the reaction tRNA(Asn) + L-asparagine + ATP = L-asparaginyl-tRNA(Asn) + AMP + diphosphate + H(+). The chain is Probable asparagine--tRNA ligase, mitochondrial (asnS2) from Dictyostelium discoideum (Social amoeba).